A 158-amino-acid polypeptide reads, in one-letter code: NAD(P)H-quinone oxidoreductase subunit J, chloroplastic (158 aa).

Belongs to the complex I 30 kDa subunit family. In terms of assembly, NDH is composed of at least 16 different subunits, 5 of which are encoded in the nucleus.

The protein resides in the plastid. It is found in the chloroplast thylakoid membrane. It catalyses the reaction a plastoquinone + NADH + (n+1) H(+)(in) = a plastoquinol + NAD(+) + n H(+)(out). It carries out the reaction a plastoquinone + NADPH + (n+1) H(+)(in) = a plastoquinol + NADP(+) + n H(+)(out). Functionally, NDH shuttles electrons from NAD(P)H:plastoquinone, via FMN and iron-sulfur (Fe-S) centers, to quinones in the photosynthetic chain and possibly in a chloroplast respiratory chain. The immediate electron acceptor for the enzyme in this species is believed to be plastoquinone. Couples the redox reaction to proton translocation, and thus conserves the redox energy in a proton gradient. This chain is NAD(P)H-quinone oxidoreductase subunit J, chloroplastic, found in Platanus occidentalis (Sycamore).